Here is a 666-residue protein sequence, read N- to C-terminus: MALFYVARYPGPDAAAAAGPEGAEAGAHGRARALLERLQSRARERQQQREPAQTEAAASTEPATRRRRRPRRRRRVNDAEPGSPEAPQGKRRKADGEDAGAESNEEAPGEPSAGSSEEAPGEPSAGSSEEAPGERSTSASAEAAPDGPALEEAAGPLVPGLVLGGFGKRKAPKVQPFLPRWLAEPNCVRRNVTEDLVPIEDIPDVHPDLQKQLRAHGISSYFPVQAAVIPALLESAACGFLVGRGGYRPSDLCVSAPTGSGKTLAFVIPVVQALLSRVVCHIRALVVLPTKELAQQVSKVFNIYTDATPLRVSLVTGQKSLAKEQESLVQKTADGYRCLADIVVATPGRLVDHIDQTPGFSLQQLRFLIIDEADRMIDSMHQSWLPRVVAAAFQSEDPADPCALLQRRQAQAVTAASTCCPQMPLQKLLFSATLTQNPEKLQQLGLHQPRLFSTGLAHRGLEDTDGDGDSGKYAFPVGLTHHYVPCSLSSKPLVVLHLVLEMGFSRVLCFTNSRENSHRLFLLVQAFGGVDVAEFSSRYGPGQRRMILKQFEQGKIQLLISTDATARGIDVQGVELVVNYDAPQYLRTYVHRVGRTARAGKTGQAFTLLLKVQERRFLRMLTEAGAPELQRHELSSKLLQPLVPRYEEALSQLEESVKEERKQRAA.

Ala-2 is modified (N-acetylalanine). Positions 9-152 (YPGPDAAAAA…AAPDGPALEE (144 aa)) are disordered. A compositionally biased stretch (low complexity) spans 10-28 (PGPDAAAAAGPEGAEAGAH). A compositionally biased stretch (basic and acidic residues) spans 33–48 (ALLERLQSRARERQQQ). A compositionally biased stretch (low complexity) spans 49–58 (REPAQTEAAA). Residues 65 to 75 (RRRRRPRRRRR) are compositionally biased toward basic residues. A phosphoserine mark is found at Ser-83 and Ser-103. Residues 97–108 (EDAGAESNEEAP) are compositionally biased toward acidic residues. Residues 221–229 (YFPVQAAVI) carry the Q motif motif. The Helicase ATP-binding domain maps to 243 to 452 (GRGGYRPSDL…QLGLHQPRLF (210 aa)). Residue 256–263 (APTGSGKT) participates in ATP binding. The short motif at 371–374 (DEAD) is the DEAD box element. Positions 494 to 640 (VVLHLVLEMG…RHELSSKLLQ (147 aa)) constitute a Helicase C-terminal domain.

It belongs to the DEAD box helicase family. DDX51/DBP6 subfamily.

The protein resides in the nucleus. The protein localises to the nucleolus. It carries out the reaction ATP + H2O = ADP + phosphate + H(+). Functionally, ATP-binding RNA helicase involved in the biogenesis of 60S ribosomal subunits. The sequence is that of ATP-dependent RNA helicase DDX51 (DDX51) from Homo sapiens (Human).